The sequence spans 296 residues: Lipoyl synthase (296 aa).

7 residues coordinate [4Fe-4S] cluster: cysteine 37, cysteine 42, cysteine 48, cysteine 63, cysteine 67, cysteine 70, and serine 276. A Radical SAM core domain is found at 49-265; the sequence is WSKKHATMMI…ERVARTKGFL (217 aa).

It belongs to the radical SAM superfamily. Lipoyl synthase family. The cofactor is [4Fe-4S] cluster.

It localises to the cytoplasm. The enzyme catalyses [[Fe-S] cluster scaffold protein carrying a second [4Fe-4S](2+) cluster] + N(6)-octanoyl-L-lysyl-[protein] + 2 oxidized [2Fe-2S]-[ferredoxin] + 2 S-adenosyl-L-methionine + 4 H(+) = [[Fe-S] cluster scaffold protein] + N(6)-[(R)-dihydrolipoyl]-L-lysyl-[protein] + 4 Fe(3+) + 2 hydrogen sulfide + 2 5'-deoxyadenosine + 2 L-methionine + 2 reduced [2Fe-2S]-[ferredoxin]. The protein operates within protein modification; protein lipoylation via endogenous pathway; protein N(6)-(lipoyl)lysine from octanoyl-[acyl-carrier-protein]: step 2/2. Catalyzes the radical-mediated insertion of two sulfur atoms into the C-6 and C-8 positions of the octanoyl moiety bound to the lipoyl domains of lipoate-dependent enzymes, thereby converting the octanoylated domains into lipoylated derivatives. In Rickettsia canadensis (strain McKiel), this protein is Lipoyl synthase.